Consider the following 232-residue polypeptide: tRNA1(Val) (adenine(37)-N6)-methyltransferase (232 aa).

This sequence belongs to the methyltransferase superfamily. tRNA (adenine-N(6)-)-methyltransferase family.

It is found in the cytoplasm. The catalysed reaction is adenosine(37) in tRNA1(Val) + S-adenosyl-L-methionine = N(6)-methyladenosine(37) in tRNA1(Val) + S-adenosyl-L-homocysteine + H(+). Its function is as follows. Specifically methylates the adenine in position 37 of tRNA(1)(Val) (anticodon cmo5UAC). This is tRNA1(Val) (adenine(37)-N6)-methyltransferase from Haemophilus influenzae (strain PittGG).